The following is a 309-amino-acid chain: General transcription factor IIH subunit 3 (309 aa).

The segment at 269-286 (CSVCLSIFCNFSPICTTC) adopts a C4-type zinc-finger fold.

The protein belongs to the TFB4 family. As to quaternary structure, part of a TFIID-containing RNA polymerase II pre-initiation complex that is composed of TBP and at least GTF2A1, GTF2A2, GTF2E1, GTF2E2, GTF2F1, GTF2H2, GTF2H3, GTF2H4, GTF2H5, GTF2B, TCEA1, ERCC2, ERCC3, TAF1, TAF2, TAF3, TAF4, TAF5, TAF6, TAF7, TAF8, TAF9, TAF10, TAF11, TAF12 and TAF13. Component of the 7-subunit TFIIH core complex composed of XPB/ERCC3, XPD/ERCC2, GTF2H1, GTF2H2, GTF2H3, GTF2H4 and GTF2H5, which is active in NER. The core complex associates with the 3-subunit CDK-activating kinase (CAK) module composed of CCNH/cyclin H, CDK7 and MNAT1 to form the 10-subunit holoenzyme (holo-TFIIH) active in transcription. Interacts with RARA; the interaction requires prior phosphorylation of RARA on 'Ser-369' which then enhances interaction of RARA with CDK7.

Its subcellular location is the nucleus. Component of the general transcription and DNA repair factor IIH (TFIIH) core complex, which is involved in general and transcription-coupled nucleotide excision repair (NER) of damaged DNA and, when complexed to CAK, in RNA transcription by RNA polymerase II. In NER, TFIIH acts by opening DNA around the lesion to allow the excision of the damaged oligonucleotide and its replacement by a new DNA fragment. In transcription, TFIIH has an essential role in transcription initiation. When the pre-initiation complex (PIC) has been established, TFIIH is required for promoter opening and promoter escape. Phosphorylation of the C-terminal tail (CTD) of the largest subunit of RNA polymerase II by the kinase module CAK controls the initiation of transcription. This Mus musculus (Mouse) protein is General transcription factor IIH subunit 3 (Gtf2h3).